A 213-amino-acid polypeptide reads, in one-letter code: High frequency lysogenization protein HflD homolog (213 aa).

The stretch at 79-126 forms a coiled coil; sequence QGLNAELTRYTLSLMVLERKLSSAKGALDTLGNRINGLQRQLEHFDLQ.

It belongs to the HflD family.

The protein resides in the cytoplasm. It localises to the cell inner membrane. The sequence is that of High frequency lysogenization protein HflD homolog from Shigella dysenteriae serotype 1 (strain Sd197).